The following is a 251-amino-acid chain: MNLNSIPAFDDNYIWVLNDEAGRCLIVDPGDAEPVLNAIAANNWQPEAIFLTHHHHDHVGGVKELVEKFPQIVVYGPQETQDKGTTQVVKDGETAFVLGHEFSVIATPGHTLGHICYFSKPYLFCGDTLFSGGCGRLFEGTASQMYQSLKKLSALPDDTLVCCAHEYTLSNMKFALSILPHDLSINDYYRKVKELRAKNQITLPVILKNERQINVFLRTEDIDLINVINEETLLQQPEERFAWLRSKKDRF.

Residues H53, H55, D57, H58, H110, and D127 each contribute to the Zn(2+) site. Substrate contacts are provided by residues 136–138 (RLF), 165–167 (HEY), and 245–248 (RSKK). Zn(2+) is bound at residue H165.

It belongs to the metallo-beta-lactamase superfamily. Glyoxalase II family. As to quaternary structure, monomer. Zn(2+) is required as a cofactor.

The enzyme catalyses an S-(2-hydroxyacyl)glutathione + H2O = a 2-hydroxy carboxylate + glutathione + H(+). The catalysed reaction is (R)-S-lactoylglutathione + H2O = (R)-lactate + glutathione + H(+). Its pathway is secondary metabolite metabolism; methylglyoxal degradation; (R)-lactate from methylglyoxal: step 2/2. Its activity is regulated as follows. Is inhibited by Cu(2+). In terms of biological role, type II glyoxalase that catalyzes the hydrolysis of (R)-S-lactoylglutathione to (R)-lactate and glutathione. Is more efficient than the isozyme GloC, and plays a major contribution to methylglyoxal (MG) detoxification in E.coli. The two isoenzymes have additive effects and ensure maximal MG degradation. This Escherichia coli (strain K12) protein is Hydroxyacylglutathione hydrolase GloB.